Consider the following 813-residue polypeptide: Cadherin-22 (813 aa).

The signal sequence occupies residues 1-33 (MRPRPEGALRAGAALSPVLLFLLLLPLLGHLWA). The Extracellular portion of the chain corresponds to 34-621 (ASTPAPSSLS…AFVMAASLSP (588 aa)). 5 consecutive Cadherin domains span residues 61–165 (WVWN…EPRF), 166–274 (LHGP…PPRF), 275–391 (PQKM…PPEF), 392–495 (RPPS…NPPE), and 496–613 (LATP…TTAF). N-linked (GlcNAc...) asparagine glycosylation occurs at Asn159. Asn463 and Asn609 each carry an N-linked (GlcNAc...) asparagine glycan. Residues 622–642 (GALIALLVCVLILVVLALLIL) form a helical membrane-spanning segment. Residues 643 to 813 (TLRRHHKSHL…HRGDDEAPAS (171 aa)) lie on the Cytoplasmic side of the membrane. The disordered stretch occupies residues 696-726 (GGDPGGGAASPPQAASSSERHSLPRGPSSPE).

In terms of tissue distribution, predominantly expressed in brain. Abundant in olfactory bulb, cerebrum, and cerebellum, less in pons, medulla, and spinal cord. Low expression in heart. No expression in lung, liver, spleen, kidney, testis, stomach, intestine, colon, and placenta.

It localises to the cell membrane. Its function is as follows. Cadherins are calcium-dependent cell adhesion proteins. They preferentially interact with themselves in a homophilic manner in connecting cells; cadherins may thus contribute to the sorting of heterogeneous cell types. PB-cadherins may have a role in the morphological organization of pituitary gland and brain tissues. In Mus musculus (Mouse), this protein is Cadherin-22 (Cdh22).